Here is a 309-residue protein sequence, read N- to C-terminus: DnaJ homolog subfamily B member 7 (309 aa).

Positions 3–69 (DYYEVLGLQR…EKRDIYDKYG (67 aa)) constitute a J domain. The disordered stretch occupies residues 282–309 (FSAGVKEGGKRKKKKRKEVQKKSTKRNC). Over residues 290-309 (GKRKKKKRKEVQKKSTKRNC) the composition is skewed to basic residues.

Probably acts as a co-chaperone. The sequence is that of DnaJ homolog subfamily B member 7 (DNAJB7) from Homo sapiens (Human).